We begin with the raw amino-acid sequence, 177 residues long: MSRIGKMPVAVPAGVDVLVKDDQISVKGAGGSLFLTQNALVKVSSDAGALSFQPANDSREANAMSGTMRQLVNNMVVGVTKGFEKKLNLVGVGYKAQAQGAKLNLTVGYSHPVNKDMPAGITVATPTPTEIVIKGADRQRVGQVAAEIRAIRPPEPYKGKGIRYSDEKITIKETKKK.

This sequence belongs to the universal ribosomal protein uL6 family. As to quaternary structure, part of the 50S ribosomal subunit.

Its function is as follows. This protein binds to the 23S rRNA, and is important in its secondary structure. It is located near the subunit interface in the base of the L7/L12 stalk, and near the tRNA binding site of the peptidyltransferase center. In Albidiferax ferrireducens (strain ATCC BAA-621 / DSM 15236 / T118) (Rhodoferax ferrireducens), this protein is Large ribosomal subunit protein uL6.